The primary structure comprises 430 residues: Enolase (430 aa).

Gln-163 is a (2R)-2-phosphoglycerate binding site. Glu-205 functions as the Proton donor in the catalytic mechanism. 3 residues coordinate Mg(2+): Asp-242, Glu-287, and Asp-314. (2R)-2-phosphoglycerate-binding residues include Lys-339, Arg-368, Ser-369, and Lys-390. The active-site Proton acceptor is the Lys-339.

The protein belongs to the enolase family. Mg(2+) serves as cofactor.

The protein localises to the cytoplasm. The protein resides in the secreted. It is found in the cell surface. It catalyses the reaction (2R)-2-phosphoglycerate = phosphoenolpyruvate + H2O. It participates in carbohydrate degradation; glycolysis; pyruvate from D-glyceraldehyde 3-phosphate: step 4/5. Functionally, catalyzes the reversible conversion of 2-phosphoglycerate (2-PG) into phosphoenolpyruvate (PEP). It is essential for the degradation of carbohydrates via glycolysis. This is Enolase from Listeria innocua serovar 6a (strain ATCC BAA-680 / CLIP 11262).